The chain runs to 548 residues: Telomerase Cajal body protein 1 (548 aa).

The tract at residues 1–142 (MKTLETQPLA…SGEPAAEDEG (142 aa)) is disordered. A compositionally biased stretch (low complexity) spans 15–31 (PSDQDPAPAHPSPHASP). Phosphoserine is present on residues Ser-26, Ser-30, and Ser-54. Ser-64 carries the post-translational modification Phosphoserine; by ATM. 4 positions are modified to phosphoserine: Ser-85, Ser-90, Ser-112, and Ser-114. 6 WD repeats span residues 167-206 (QPEN…YHEG), 222-267 (EGDT…LRAS), 272-313 (NHLD…RDCE), 323-364 (GQSG…ALLG), 365-405 (GHQG…YPLW), and 411-450 (VTTN…NDGK). Thr-489 is subject to Phosphothreonine. The residue at position 491 (Ser-491) is a Phosphoserine. Residues 526–548 (SIPDDHQGEKGQGGTEGGVGELI) are disordered. Gly residues predominate over residues 535–548 (KGQGGTEGGVGELI).

This sequence belongs to the TCAB1 family. As to quaternary structure, component of the telomerase holoenzyme complex composed of one molecule of TERT, one molecule of WRAP53/TCAB1, two molecules of H/ACA ribonucleoprotein complex subunits DKC1, NOP10, NHP2 and GAR1, and a telomerase RNA template component (TERC). The telomerase holoenzyme complex is associated with TEP1, SMG6/EST1A and POT1. Interacts with the chaperonin-containing T-complex (TRiC) complex; which mediates the folding of WRAP53/TCAB1. Interacts with COIL. Interacts with SMN1. Interacts with RNF8. Interacts with histone H2AX. Post-translationally, phosphorylated at Ser-64 by ATM in response to DNA damage, promoting its interaction with histone H2AX and localization to sites of DNA double-strand breaks. As to expression, expressed in all tissues and cell lines examined.

The protein resides in the nucleus. Its subcellular location is the cajal body. It localises to the chromosome. It is found in the telomere. Its function is as follows. RNA chaperone that plays a key role in telomere maintenance and RNA localization to Cajal bodies. Specifically recognizes and binds the Cajal body box (CAB box) present in both small Cajal body RNAs (scaRNAs) and telomerase RNA template component (TERC). Essential component of the telomerase holoenzyme complex, a ribonucleoprotein complex essential for the replication of chromosome termini that elongates telomeres in most eukaryotes. In the telomerase holoenzyme complex, required to stimulate the catalytic activity of the complex. Acts by specifically binding the CAB box of the TERC RNA and controlling the folding of the CR4/CR5 region of the TERC RNA, a critical step for telomerase activity. In addition, also controls telomerase holoenzyme complex localization to Cajal body. During S phase, required for delivery of TERC to telomeres during S phase and for telomerase activity. In addition to its role in telomere maintenance, also required for Cajal body formation, probably by mediating localization of scaRNAs to Cajal bodies. Also plays a role in DNA repair: phosphorylated by ATM in response to DNA damage and relocalizes to sites of DNA double-strand breaks to promote the repair of DNA double-strand breaks. Acts by recruiting the ubiquitin ligase RNF8 to DNA breaks and promote both homologous recombination (HR) and non-homologous end joining (NHEJ). The protein is Telomerase Cajal body protein 1 of Homo sapiens (Human).